A 327-amino-acid chain; its full sequence is 2-methoxy-6-polyprenyl-1,4-benzoquinol methylase, mitochondrial (327 aa).

A mitochondrion-targeting transit peptide spans 1-43; the sequence is MAAPIRAFVLRVLSDSTRNIHHVLRCRSKYLCRRAAITARRGY. S-adenosyl-L-methionine is bound by residues Thr117, Asp171, and 199–200; that span reads DA.

This sequence belongs to the class I-like SAM-binding methyltransferase superfamily. MenG/UbiE family. Component of a multi-subunit COQ enzyme complex, composed of at least coq3, coq4, coq5, coq6, coq7 and coq9.

Its subcellular location is the mitochondrion inner membrane. It carries out the reaction a 2-methoxy-6-(all-trans-polyprenyl)benzene-1,4-diol + S-adenosyl-L-methionine = a 5-methoxy-2-methyl-3-(all-trans-polyprenyl)benzene-1,4-diol + S-adenosyl-L-homocysteine + H(+). The protein operates within cofactor biosynthesis; ubiquinone biosynthesis. In terms of biological role, methyltransferase required for the conversion of 2-polyprenyl-6-methoxy-1,4-benzoquinol (DDMQH2) to 2-polyprenyl-3-methyl-6-methoxy-1,4-benzoquinol (DMQH2). The protein is 2-methoxy-6-polyprenyl-1,4-benzoquinol methylase, mitochondrial of Danio rerio (Zebrafish).